A 482-amino-acid polypeptide reads, in one-letter code: Retrovirus-related Pol polyprotein from type-1 retrotransposable element R2 (482 aa).

In terms of domain architecture, Reverse transcriptase spans 1–84; the sequence is AYADDLILFA…DYFKYLGSRY (84 aa). The segment at 208 to 482 is nucleic acid-binding endonuclease; that stretch reads QIPAVEKFYQ…ATGGRGRGDI (275 aa).

The catalysed reaction is DNA(n) + a 2'-deoxyribonucleoside 5'-triphosphate = DNA(n+1) + diphosphate. The protein is Retrovirus-related Pol polyprotein from type-1 retrotransposable element R2 of Popillia japonica (Japanese beetle).